The sequence spans 81 residues: Putative membrane protein insertion efficiency factor (81 aa).

This sequence belongs to the UPF0161 family.

It localises to the cell inner membrane. In terms of biological role, could be involved in insertion of integral membrane proteins into the membrane. In Pseudomonas syringae pv. syringae (strain B728a), this protein is Putative membrane protein insertion efficiency factor.